The sequence spans 1066 residues: Allene oxide synthase-lipoxygenase protein (1066 aa).

The interval 1–371 is allene oxide synthase; the sequence is MTWKNFGFEI…LKIGSLVPAG (371 aa). Heme is bound at residue tyrosine 353. Positions 372–1066 are arachidonate 8-lipoxygenase; that stretch reads QNAIYNVEVE…PERIPNGTAI (695 aa). Residues 374–490 enclose the PLAT domain; sequence AIYNVEVETG…KDMVLFPGEA (117 aa). Residues histidine 387, glycine 389, threonine 390, aspartate 391, asparagine 416, aspartate 417, glutamate 419, aspartate 452, and aspartate 454 each contribute to the Ca(2+) site. The Lipoxygenase domain occupies 491 to 1066; that stretch reads TLPFNEVPAI…PERIPNGTAI (576 aa). 5 residues coordinate Fe cation: histidine 757, histidine 762, histidine 943, asparagine 947, and isoleucine 1066.

This sequence in the C-terminal section; belongs to the lipoxygenase family. In terms of assembly, dimer. Requires Ca(2+) as cofactor. It depends on Fe cation as a cofactor. The cofactor is heme.

Its subcellular location is the cytoplasm. It is found in the membrane. It carries out the reaction (5Z,8Z,11Z,14Z)-eicosatetraenoate + O2 = (8R)-hydroperoxy-(5Z,9E,11Z,14Z)-eicosatetraenoate. It catalyses the reaction (8R)-hydroperoxy-(5Z,9E,11Z,14Z)-eicosatetraenoate = 8,9-epoxy-(5Z,9E,11Z,14Z)-eicosatetraenoate + H2O. The catalysed reaction is (5Z,8Z,11Z,14Z,17Z)-eicosapentaenoate + O2 = (8R)-hydroperoxy-(5Z,9E,11Z,14Z,17Z)-eicosapentaenoate. The enzyme catalyses (4Z,7Z,10Z,13Z,16Z,19Z)-docosahexaenoate + O2 = 10-hydroperoxy-(4Z,7Z,11E,13Z,16Z,19Z)-docosahexaenoate. It carries out the reaction (8Z,11Z,14Z)-eicosatrienoate + O2 = (8R)-hydroperoxy-(9E,11Z,14Z)-eicosatrienoate. It catalyses the reaction (8Z,11Z,14Z)-eicosatrienoate + O2 = 10-hydroperoxy-(8Z,11Z,14Z)-eicosatrienoate. The catalysed reaction is (8Z,11Z,14Z)-eicosatrienoate + O2 = 11-hydroperoxy-(8Z,12E,14Z)-eicosatrienoate. Its pathway is lipid metabolism; arachidonate metabolism. It functions in the pathway lipid metabolism; fatty acid metabolism. Lipoxygenase activity is stimulated by calcium, sodium, lithium and potassium ions. Calcium binding promotes interaction with membranes and thus facilitates access to substrates. Its function is as follows. Bifunctional enzyme which is responsible for allene oxide biosynthesis via a two-step reaction; first the lipoxygenase reaction that converts polyunsaturated fatty acids such as arachidonate ((5Z,8Z,11Z,14Z)-eicosatetraenoate) into a (8R)-hydroperoxide intermediate ((8R)-hydroperoxy-(5Z,9E,11Z,14Z)-eicosatetraenoate) followed by the allene oxide synthase reaction that converts the hydroperoxide intermediate ((8R)-hydroperoxy-(5Z,9E,11Z,14Z)-eicosatetraenoate) into the allene oxide (8,9-epoxy-(5Z,9E,11Z,14Z)-eicosatetraenoate). Shows preference for C20 or C22 highly polyunsaturated fatty acids and no activity with C18 fatty acids in vitro. Fatty acid allene oxides are intermediates in the formation of cyclopentenones or hydrolytic products in marine systems, most notably the prostanoid-related clavulones. The sequence is that of Allene oxide synthase-lipoxygenase protein from Plexaura homomalla (Black sea rod).